The following is a 55-amino-acid chain: MAKATTIKIKLLSTADTGFFYVTTKNSRTMTDKMTKTKYDPVARKHVEFKEAKIK.

Belongs to the bacterial ribosomal protein bL33 family.

The protein is Large ribosomal subunit protein bL33 of Sinorhizobium medicae (strain WSM419) (Ensifer medicae).